The chain runs to 216 residues: Probable GTP-binding protein EngB (216 aa).

An EngB-type G domain is found at 37–214 (QGLEVAFAGR…RAAIIKLVAE (178 aa)). GTP-binding positions include 45-52 (GRSNVGKS), 72-76 (GRTQE), 92-95 (DMPG), 159-162 (TKAD), and 193-195 (TSS). Residues serine 52 and threonine 74 each contribute to the Mg(2+) site.

It belongs to the TRAFAC class TrmE-Era-EngA-EngB-Septin-like GTPase superfamily. EngB GTPase family. It depends on Mg(2+) as a cofactor.

Functionally, necessary for normal cell division and for the maintenance of normal septation. The chain is Probable GTP-binding protein EngB from Rhodopseudomonas palustris (strain BisA53).